The sequence spans 997 residues: Synaptonemal complex protein 1 (997 aa).

Residues Pro-102–Lys-112 carry the Mediates head to head self-assembly of N-terminal ends motif. The Nuclear localization signal signature appears at Lys-118 to Lys-121. Coiled coils occupy residues Lys-121–Glu-176 and Tyr-212–Ser-696. Residues Glu-207–Gln-363 form an interaction with SYCE3 region. The interval Glu-698–Glu-792 is required for pH-induced assembly of C-terminal ends into antiparallel tetramers. The short motif at Leu-701 to Val-704 is the Nuclear localization signal element. Residues Lys-768–Thr-806 adopt a coiled-coil conformation. Residues Asn-805–Thr-997 are DNA-binding. Ser-824 carries the phosphoserine modification. A disordered region spans residues Thr-828 to Ala-863. The span at Lys-835–Ser-851 shows a compositional bias: polar residues. Positions Gly-852 to Leu-861 are enriched in basic and acidic residues. The Nuclear localization signal signature appears at Lys-902–Lys-905. A Phosphothreonine modification is found at Thr-940.

As to quaternary structure, structural component of synaptonemal complexes. Homotetramer that consists of an N-terminal four-helical bundle that bifurcates into two elongated C-terminal dimeric coiled coils. This tetrameric building block potentially self-assembles into a supramolecular zipper-like lattice to mediate meiotic chromosome synapsis. Self-assembly is likely initiated by local proton density at chromosome axis, which is predicted to trigger antiparallel back to back assembly of adjacent C-terminal ends into tetrameric structures that anchor to chromosomal DNA. Then the N-terminal ends are predicted to undergo cooperative antiparallel head to head assembly at the midline of synaptonemal complexes central element to form a zipper-like lattice between properly aligned homologous chromosomes. The nascent synapsis generated by SYCP1 is stabilized through interaction with central element proteins SYCE1 and SYCE2. Interacts (via tetrameric core) with SYCE3; the interaction remodels SYCP1 homotetramers to 2:1 heterotrimers with SYCE3. SYCP1/SYCE3 heterotrimers form lattice assemblies as part of the mature synaptonemal complex via both lateral and head-to-head interactions. Forms a complex with EWSR1, PRDM9, SYCP3 and REC8; complex formation is dependent of phosphorylated form of REC8 and requires PRDM9 bound to hotspot DNA; EWSR1 joins PRDM9 with the chromosomal axis through REC8. Interacts with SPO16. In terms of tissue distribution, testis.

It localises to the nucleus. The protein resides in the chromosome. Its subcellular location is the centromere. Its function is as follows. Major component of the transverse filaments of synaptonemal complexes, formed between homologous chromosomes during meiotic prophase. Required for normal assembly of the central element of the synaptonemal complexes. Required for normal centromere pairing during meiosis. Required for normal meiotic chromosome synapsis during oocyte and spermatocyte development and for normal male and female fertility. The polypeptide is Synaptonemal complex protein 1 (Rattus norvegicus (Rat)).